A 361-amino-acid chain; its full sequence is DNA replication and repair protein RecF (361 aa).

Position 30 to 37 (30 to 37 (GANGSGKT)) interacts with ATP.

This sequence belongs to the RecF family.

The protein localises to the cytoplasm. Functionally, the RecF protein is involved in DNA metabolism; it is required for DNA replication and normal SOS inducibility. RecF binds preferentially to single-stranded, linear DNA. It also seems to bind ATP. This Chromohalobacter salexigens (strain ATCC BAA-138 / DSM 3043 / CIP 106854 / NCIMB 13768 / 1H11) protein is DNA replication and repair protein RecF.